The primary structure comprises 282 residues: Bis(5'-nucleosyl)-tetraphosphatase, symmetrical (282 aa).

Belongs to the Ap4A hydrolase family.

It carries out the reaction P(1),P(4)-bis(5'-adenosyl) tetraphosphate + H2O = 2 ADP + 2 H(+). Its function is as follows. Hydrolyzes diadenosine 5',5'''-P1,P4-tetraphosphate to yield ADP. The polypeptide is Bis(5'-nucleosyl)-tetraphosphatase, symmetrical (Escherichia coli O45:K1 (strain S88 / ExPEC)).